Here is a 144-residue protein sequence, read N- to C-terminus: uncharacterized protein (144 aa).

Residues 72-90 (VAIGTSLIVGAGVAMEVSV) form a helical membrane-spanning segment.

To yeast YCL21w.

The protein localises to the membrane. This is an uncharacterized protein from Saccharomyces cerevisiae (strain ATCC 204508 / S288c) (Baker's yeast).